The sequence spans 912 residues: Phosphoenolpyruvate carboxylase (912 aa).

Residues His138 and Lys575 contribute to the active site.

Belongs to the PEPCase type 1 family. Mg(2+) is required as a cofactor.

The enzyme catalyses oxaloacetate + phosphate = phosphoenolpyruvate + hydrogencarbonate. Functionally, forms oxaloacetate, a four-carbon dicarboxylic acid source for the tricarboxylic acid cycle. This chain is Phosphoenolpyruvate carboxylase, found in Lactobacillus helveticus (strain DPC 4571).